Here is a 571-residue protein sequence, read N- to C-terminus: MTNMRTMIPAGSSVLVWVTCLLLAFVTTVTGPKVIQPEVDTPLGRVRGRQVGVKDTDRMVNVFLGIPFAQAPVGPLRFSAPLPPQPWEGVRDASINPPMCLQDVEKMINSRFGLNEKIKIFPISEDCLTLNIYSPTEITAGDKRPVMVWIHGGSLLVGSSTSQDGSALAAYGDVVVVTVQYRLGIFGFLSTGDKHMPGNRGFLDVVAALRWVQGNIAPFGGDPNCVTIFGNSAGGMIVSSLFLSPISAGLFHRAISQSGIVTTIMMEDMKPWPEAQNFANSVACGSASPAELVQCLLQKEGKDLIKQKNVNISYIVNDSFFPQRPEKLLADQQFPTVPYLLGVTNHEFGWLLLKSLNILDKLEHLSREDLLEISRPFLAIMEVPPEIMPTVIDEYLDNGSDQSATRYAFQELLGDISFIIPTLNFSKYLRDAGCPVFLYEFQHTPSSFAKFKPAWVKADHASENSFVFGGPFLTDESSLLAFPEATEEEKQLSLTMMAQWSQFARTGNPNGKGLPPWPQLNQLEQYLEIGLESRTGVKLKKGRLQFWTETLPRKIQEWHREQRSRKVPEEL.

An N-terminal signal peptide occupies residues M1–G31. A disulfide bridge links C100 with C127. S232 acts as the Acyl-ester intermediate in catalysis. An intrachain disulfide couples C284 to C295. N311 is a glycosylation site (N-linked (GlcNAc...) asparagine). Catalysis depends on charge relay system residues E347 and H460. The short motif at P568–L571 is the Prevents secretion from ER element.

The protein belongs to the type-B carboxylesterase/lipase family.

The protein localises to the endoplasmic reticulum lumen. The enzyme catalyses a carboxylic ester + H2O = an alcohol + a carboxylate + H(+). Its function is as follows. Involved in the detoxification of xenobiotics and in the activation of ester and amide prodrugs. This chain is Carboxylesterase 3B (Ces3b), found in Mus musculus (Mouse).